A 470-amino-acid chain; its full sequence is Argininosuccinate lyase (470 aa).

This sequence belongs to the lyase 1 family. Argininosuccinate lyase subfamily.

It is found in the cytoplasm. The catalysed reaction is 2-(N(omega)-L-arginino)succinate = fumarate + L-arginine. It functions in the pathway amino-acid biosynthesis; L-arginine biosynthesis; L-arginine from L-ornithine and carbamoyl phosphate: step 3/3. This chain is Argininosuccinate lyase, found in Synechococcus sp. (strain WH7803).